We begin with the raw amino-acid sequence, 472 residues long: Excisase A (472 aa).

One can recognise a Tyr recombinase domain in the interval 244-429 (EILSGITKFE…FSLDMRKLAI (186 aa)). Catalysis depends on residues R287, K317, R384, and H407. Y416 (O-(3'-phospho-DNA)-tyrosine intermediate) is an active-site residue.

This sequence belongs to the XisA/XisC recombinase family.

Its function is as follows. Essential for DNA excision. Site specific recombinase necessary for the excision of the 11 kb nifD element during heterocyst differentiation. This is Excisase A (xisA) from Nostoc sp. (strain PCC 7120 / SAG 25.82 / UTEX 2576).